The sequence spans 149 residues: 1,4-dihydroxy-2-naphthoyl-CoA hydrolase (149 aa).

Aspartate 19 is a catalytic residue.

Belongs to the 4-hydroxybenzoyl-CoA thioesterase family. DHNA-CoA hydrolase subfamily.

It carries out the reaction 1,4-dihydroxy-2-naphthoyl-CoA + H2O = 1,4-dihydroxy-2-naphthoate + CoA + H(+). The protein operates within cofactor biosynthesis; phylloquinone biosynthesis. It functions in the pathway quinol/quinone metabolism; 1,4-dihydroxy-2-naphthoate biosynthesis; 1,4-dihydroxy-2-naphthoate from chorismate: step 7/7. Its function is as follows. Catalyzes the hydrolysis of 1,4-dihydroxy-2-naphthoyl-CoA (DHNA-CoA) to 1,4-dihydroxy-2-naphthoate (DHNA), a reaction involved in phylloquinone (vitamin K1) biosynthesis. This chain is 1,4-dihydroxy-2-naphthoyl-CoA hydrolase, found in Synechococcus sp. (strain CC9902).